The chain runs to 339 residues: Terpene synthase 9 (339 aa).

The DDxx(x)D/E motif motif lies at 79–84; that stretch reads DDFLES. The NDxxSxxxD/E motif motif lies at 219–227; it reads NDCASYAKE.

This sequence belongs to the terpene synthase family.

The catalysed reaction is (2E,6E)-farnesyl diphosphate = (-)-beta-barbatene + diphosphate. It catalyses the reaction (2E,6E)-farnesyl diphosphate = (E)-beta-farnesene + diphosphate. It carries out the reaction (2E)-geranyl diphosphate = (Z)-beta-ocimene + diphosphate. The enzyme catalyses (2E)-geranyl diphosphate + H2O = linalool + diphosphate. The catalysed reaction is (2E)-geranyl diphosphate = beta-myrcene + diphosphate. Its function is as follows. Terpene synthase that converts its substrate farnesyl diphosphate (FPP) into the sesquiterpene beta-barbatene as a major product as well as (E)-beta-farnesene as a minor product. Is also able to convert geranyl diphosphate (GPP) into a mixture of monoterpenes including (Z)-beta-ocimene, linalool, beta-myrcene, limonene and alpha-terpineol. This Dictyostelium discoideum (Social amoeba) protein is Terpene synthase 9.